A 317-amino-acid polypeptide reads, in one-letter code: Ribonuclease Z (317 aa).

7 residues coordinate Zn(2+): His-61, His-63, Asp-65, His-66, His-153, Asp-221, and His-280. Asp-65 (proton acceptor) is an active-site residue.

The protein belongs to the RNase Z family. Homodimer. The cofactor is Zn(2+).

The enzyme catalyses Endonucleolytic cleavage of RNA, removing extra 3' nucleotides from tRNA precursor, generating 3' termini of tRNAs. A 3'-hydroxy group is left at the tRNA terminus and a 5'-phosphoryl group is left at the trailer molecule.. Zinc phosphodiesterase, which displays some tRNA 3'-processing endonuclease activity. Probably involved in tRNA maturation, by removing a 3'-trailer from precursor tRNA. This Alkaliphilus oremlandii (strain OhILAs) (Clostridium oremlandii (strain OhILAs)) protein is Ribonuclease Z.